Reading from the N-terminus, the 117-residue chain is Immunoglobulin heavy variable 5-51 (117 aa).

A signal peptide spans 1–19; sequence MGSTAILALLLAVLQGVCA. The tract at residues 20 to 44 is framework-1; that stretch reads EVQLVQSGAEVKKPGESLKISCKGS. Positions 20–117 constitute an Ig-like domain; sequence EVQLVQSGAE…SDTAMYYCAR (98 aa). Cysteine 41 and cysteine 115 are oxidised to a cystine. A complementarity-determining-1 region spans residues 45-52; that stretch reads GYSFTSYW. Residues 53–69 form a framework-2 region; it reads IGWVRQMPGKGLEWMGI. The complementarity-determining-2 stretch occupies residues 70–77; the sequence is IYPGDSDT. The segment at 78-115 is framework-3; that stretch reads RYSPSFQGQVTISADKSISTAYLQWSSLKASDTAMYYC. Positions 116–117 are complementarity-determining-3; sequence AR.

In terms of assembly, immunoglobulins are composed of two identical heavy chains and two identical light chains; disulfide-linked.

Its subcellular location is the secreted. The protein resides in the cell membrane. In terms of biological role, v region of the variable domain of immunoglobulin heavy chains that participates in the antigen recognition. Immunoglobulins, also known as antibodies, are membrane-bound or secreted glycoproteins produced by B lymphocytes. In the recognition phase of humoral immunity, the membrane-bound immunoglobulins serve as receptors which, upon binding of a specific antigen, trigger the clonal expansion and differentiation of B lymphocytes into immunoglobulins-secreting plasma cells. Secreted immunoglobulins mediate the effector phase of humoral immunity, which results in the elimination of bound antigens. The antigen binding site is formed by the variable domain of one heavy chain, together with that of its associated light chain. Thus, each immunoglobulin has two antigen binding sites with remarkable affinity for a particular antigen. The variable domains are assembled by a process called V-(D)-J rearrangement and can then be subjected to somatic hypermutations which, after exposure to antigen and selection, allow affinity maturation for a particular antigen. The chain is Immunoglobulin heavy variable 5-51 from Homo sapiens (Human).